A 121-amino-acid chain; its full sequence is Small ribosomal subunit protein uS13 (121 aa).

Residues 94-121 form a disordered region; it reads GLPVRGQRTRTNARTRKGPRKGAAALKK.

The protein belongs to the universal ribosomal protein uS13 family. As to quaternary structure, part of the 30S ribosomal subunit. Forms a loose heterodimer with protein S19. Forms two bridges to the 50S subunit in the 70S ribosome.

Its function is as follows. Located at the top of the head of the 30S subunit, it contacts several helices of the 16S rRNA. In the 70S ribosome it contacts the 23S rRNA (bridge B1a) and protein L5 of the 50S subunit (bridge B1b), connecting the 2 subunits; these bridges are implicated in subunit movement. Contacts the tRNAs in the A and P-sites. This Verminephrobacter eiseniae (strain EF01-2) protein is Small ribosomal subunit protein uS13.